The primary structure comprises 71 residues: Large ribosomal subunit protein uL29 (71 aa).

Belongs to the universal ribosomal protein uL29 family.

This is Large ribosomal subunit protein uL29 (rpl29) from Aeropyrum pernix (strain ATCC 700893 / DSM 11879 / JCM 9820 / NBRC 100138 / K1).